The chain runs to 729 residues: Oligopeptide transporter 4 (729 aa).

The residue at position 2 (alanine 2) is an N-acetylalanine. Residue serine 8 is modified to Phosphoserine. The next 16 membrane-spanning stretches (helical) occupy residues 37–57, 61–81, 123–143, 148–168, 177–194, 207–227, 256–276, 279–299, 352–372, 410–430, 438–458, 522–542, 592–612, 621–637, 640–660, and 673–693; these read MWFL…FFSY, PLVI…HFLA, AFGS…AFYG, FIAG…WAGL, AHMW…FRAL, FFVI…YLFT, GLGA…SPLI, FFAI…VLPL, LSMF…STLT, WWFY…CVFL, WWGL…ISII, FLVQ…VAWW, YAAM…VWSL, WIPL…TAMM, ATAV…LFVF, and VLSA…YFSV.

Belongs to the oligopeptide OPT transporter (TC 2.A.67.1) family. In terms of tissue distribution, expressed in flowers, leaves, roots, and stems.

The protein resides in the membrane. Involved in the translocation of tetra- and pentapeptides across the cellular membrane in an energy-dependent manner. The sequence is that of Oligopeptide transporter 4 (OPT4) from Arabidopsis thaliana (Mouse-ear cress).